A 134-amino-acid chain; its full sequence is uncharacterized protein (134 aa).

The first 16 residues, 1-16, serve as a signal peptide directing secretion; that stretch reads MAKAVALLLAAIAASA.

This is an uncharacterized protein from Oryza sativa subsp. indica (Rice).